A 390-amino-acid chain; its full sequence is UPF0229 protein ABC1477 (390 aa).

2 disordered regions span residues 1–31 (MEKDNGRQFTISQENWSLHRKGFQDQRRHQE) and 81–118 (VGQGKGDSKIGDIVARDPNGDKQAGAGKGSGAGDQAGE). Residues 7–16 (RQFTISQENW) are compositionally biased toward polar residues. Basic and acidic residues-rich tracts occupy residues 22–31 (GFQDQRRHQE) and 86–100 (GDSKIGDIVARDPNG).

The protein belongs to the UPF0229 family.

The sequence is that of UPF0229 protein ABC1477 from Shouchella clausii (strain KSM-K16) (Alkalihalobacillus clausii).